The following is a 76-amino-acid chain: Small ribosomal subunit protein bS18 (76 aa).

It belongs to the bacterial ribosomal protein bS18 family. In terms of assembly, part of the 30S ribosomal subunit. Forms a tight heterodimer with protein bS6.

Functionally, binds as a heterodimer with protein bS6 to the central domain of the 16S rRNA, where it helps stabilize the platform of the 30S subunit. The sequence is that of Small ribosomal subunit protein bS18 from Alkaliphilus metalliredigens (strain QYMF).